Here is a 343-residue protein sequence, read N- to C-terminus: Replication initiation protein (343 aa).

The interval 42–61 (ERKRTKRRRGEHSTKPKCEN) is disordered.

In terms of biological role, probably functions as an initiator for the IncI1 ColIb-P9 replicon. This Escherichia coli protein is Replication initiation protein (repZ).